The following is a 134-amino-acid chain: Replication enhancer protein (134 aa).

Belongs to the geminiviridae replication enhancer protein family. As to quaternary structure, homooligomer. Interacts with the replication-associated protein (REP). Interacts with host proliferating cell nuclear antigen (PCNA). Interacts with host retinoblastoma-related protein 1 (RBR1), and may thereby deregulate the host cell cycle. Oligomerization and interaction with PCNA are necessary for optimal replication enhancement.

Increases viral DNA accumulation. Enhances infectivity and symptom expression. This Squash leaf curl virus (SLCV) protein is Replication enhancer protein.